The sequence spans 118 residues: Large ribosomal subunit protein bL19 (118 aa).

Belongs to the bacterial ribosomal protein bL19 family.

This protein is located at the 30S-50S ribosomal subunit interface and may play a role in the structure and function of the aminoacyl-tRNA binding site. In Metamycoplasma arthritidis (strain 158L3-1) (Mycoplasma arthritidis), this protein is Large ribosomal subunit protein bL19.